The sequence spans 337 residues: Cytoskeleton protein RodZ (337 aa).

Topologically, residues 1-111 (MNTEATHDQN…LGKRRKKRDG (111 aa)) are cytoplasmic. Residues 19–71 (LRNAREQLGLSQQAVAERLCLKVSTVRDIEEDKAPADLASTFLRGYIRSYARL) enclose the HTH cro/C1-type domain. Positions 30-49 (QQAVAERLCLKVSTVRDIEE) form a DNA-binding region, H-T-H motif. Residues 112-132 (WLMTFTWLVLFVVIGLSGAWW) form a helical; Signal-anchor for type II membrane protein membrane-spanning segment. The Periplasmic portion of the chain corresponds to 133–337 (WQDHKAQQEE…TLNAEQSPAQ (205 aa)). Over residues 145-167 (TMADQSSAELSSNSEQGQSVPLN) the composition is skewed to polar residues. The interval 145–235 (TMADQSSAEL…PTAATTPDGA (91 aa)) is disordered. The segment covering 168–207 (TSTTTDPATTSTPPASVDTTATNTQTPAVTAPAPAVDPQQ) has biased composition (low complexity). Residues 208–218 (NAVVSPSQANV) are compositionally biased toward polar residues. Low complexity predominate over residues 219–235 (DTAATPAPTAATTPDGA).

Belongs to the RodZ family.

It localises to the cell inner membrane. Functionally, cytoskeletal protein that is involved in cell-shape control through regulation of the length of the long axis. In Shigella boydii serotype 4 (strain Sb227), this protein is Cytoskeleton protein RodZ.